Here is a 306-residue protein sequence, read N- to C-terminus: Transcription initiation factor IIB (306 aa).

A run of 2 repeats spans residues 122 to 205 (NELE…LREL) and 216 to 297 (DYVT…ELTQ).

Belongs to the TFIIB family.

Its function is as follows. Stabilizes TBP binding to an archaeal box-A promoter. Also responsible for recruiting RNA polymerase II to the pre-initiation complex (DNA-TBP-TFIIB). The chain is Transcription initiation factor IIB from Saccharolobus shibatae (strain ATCC 51178 / DSM 5389 / JCM 8931 / NBRC 15437 / B12) (Sulfolobus shibatae).